Reading from the N-terminus, the 151-residue chain is Deoxyuridine 5'-triphosphate nucleotidohydrolase (151 aa).

Substrate contacts are provided by residues 70–72, N83, 87–89, and M97; these read RSG and LID.

This sequence belongs to the dUTPase family. Mg(2+) serves as cofactor.

The catalysed reaction is dUTP + H2O = dUMP + diphosphate + H(+). Its pathway is pyrimidine metabolism; dUMP biosynthesis; dUMP from dCTP (dUTP route): step 2/2. Functionally, this enzyme is involved in nucleotide metabolism: it produces dUMP, the immediate precursor of thymidine nucleotides and it decreases the intracellular concentration of dUTP so that uracil cannot be incorporated into DNA. This chain is Deoxyuridine 5'-triphosphate nucleotidohydrolase, found in Shigella sonnei (strain Ss046).